The following is a 105-amino-acid chain: Iron-sulfur cluster assembly protein CyaY (105 aa).

Belongs to the frataxin family.

Functionally, involved in iron-sulfur (Fe-S) cluster assembly. May act as a regulator of Fe-S biogenesis. The chain is Iron-sulfur cluster assembly protein CyaY from Paraburkholderia xenovorans (strain LB400).